Consider the following 334-residue polypeptide: Probable allantoicase (334 aa).

The protein belongs to the allantoicase family.

It carries out the reaction allantoate + H2O = (S)-ureidoglycolate + urea. It participates in nitrogen metabolism; (S)-allantoin degradation; (S)-ureidoglycolate from allantoate (aminidohydrolase route): step 1/1. This Acinetobacter baylyi (strain ATCC 33305 / BD413 / ADP1) protein is Probable allantoicase.